We begin with the raw amino-acid sequence, 295 residues long: Aspartate carbamoyltransferase catalytic subunit (295 aa).

2 residues coordinate carbamoyl phosphate: R49 and T50. K77 provides a ligand contact to L-aspartate. Carbamoyl phosphate contacts are provided by R99, H127, and Q130. The L-aspartate site is built by R161 and R212. G251 and P252 together coordinate carbamoyl phosphate.

The protein belongs to the aspartate/ornithine carbamoyltransferase superfamily. ATCase family. Heterododecamer (2C3:3R2) of six catalytic PyrB chains organized as two trimers (C3), and six regulatory PyrI chains organized as three dimers (R2).

It carries out the reaction carbamoyl phosphate + L-aspartate = N-carbamoyl-L-aspartate + phosphate + H(+). It participates in pyrimidine metabolism; UMP biosynthesis via de novo pathway; (S)-dihydroorotate from bicarbonate: step 2/3. Catalyzes the condensation of carbamoyl phosphate and aspartate to form carbamoyl aspartate and inorganic phosphate, the committed step in the de novo pyrimidine nucleotide biosynthesis pathway. This is Aspartate carbamoyltransferase catalytic subunit from Aliarcobacter butzleri (strain RM4018) (Arcobacter butzleri).